A 221-amino-acid chain; its full sequence is Ras-related protein Rab-27A (221 aa).

An N-acetylserine modification is found at serine 2. Phosphoserine is present on serine 2. Glycine 16–serine 24 contacts GTP. An Effector region motif is present at residues phenylalanine 38 to phenylalanine 46. GTP is bound by residues aspartate 74 to glutamine 78, asparagine 133 to aspartate 136, and serine 163 to alanine 165. Cysteine 123 and cysteine 188 form a disulfide bridge. Residues cysteine 219 and cysteine 221 are each lipidated (S-geranylgeranyl cysteine). Cysteine 221 is subject to Cysteine methyl ester.

This sequence belongs to the small GTPase superfamily. Rab family. As to quaternary structure, binds SYTL1, SLAC2B, MYRIP, SYTL3, SYTL4 and SYTL5. Interacts with RPH3A and RPH3A. Binds MLPH and SYTL2. Interacts with UNC13D. Does not interact with the BLOC-3 complex (heterodimer of HPS1 and HPS4). Interacts (GDP-bound form preferentially) with DENND10.

It is found in the membrane. The protein localises to the melanosome. The protein resides in the late endosome. It localises to the lysosome. The enzyme catalyses GTP + H2O = GDP + phosphate + H(+). With respect to regulation, regulated by guanine nucleotide exchange factors (GEFs) which promote the exchange of bound GDP for free GTP, GTPase activating proteins (GAPs) which increase the GTP hydrolysis activity, and GDP dissociation inhibitors which inhibit the dissociation of the nucleotide from the GTPase. Activated by GEFs such as DENND10. Its function is as follows. Small GTPase which cycles between active GTP-bound and inactive GDP-bound states. In its active state, binds to a variety of effector proteins to regulate homeostasis of late endocytic pathway, including endosomal positioning, maturation and secretion. Plays a role in cytotoxic granule exocytosis in lymphocytes. Required for both granule maturation and granule docking and priming at the immunologic synapse. This chain is Ras-related protein Rab-27A (RAB27A), found in Canis lupus familiaris (Dog).